The chain runs to 466 residues: Gamma-aminobutyric acid receptor subunit gamma-2 (466 aa).

Residues 1-38 (MSSPNTWSTGSTVYSPVFSQKMTLWILLLLSLYPGFTS) form the signal peptide. At 39-274 (QKSDDDYEDY…FDLSRRMGYF (236 aa)) the chain is on the extracellular side. Residues asparagine 51 and asparagine 128 are each glycosylated (N-linked (GlcNAc...) asparagine). Cysteine 189 and cysteine 203 are joined by a disulfide. Residue asparagine 246 is glycosylated (N-linked (GlcNAc...) asparagine). A helical transmembrane segment spans residues 275–295 (TIQTYIPCTLIVVLSWVSFWI). Residues 296-301 (NKDAVP) are Cytoplasmic-facing. Residues 302-321 (ARTSLGITTVLTMTTLSTIA) form a helical membrane-spanning segment. Residues 322–333 (RKSLPKVSYVTA) are Extracellular-facing. Residues 334–358 (MDLFVSVCFIFVFSALVEYGTLHYF) form a helical membrane-spanning segment. Residues 359 to 442 (VSNRKPSKDK…IHIRIAKMDS (84 aa)) are Cytoplasmic-facing. Residues 443 to 463 (YARIFFPTAFCLFNLVYWVSY) traverse the membrane as a helical segment. Topologically, residues 464–466 (LYL) are extracellular.

Belongs to the ligand-gated ion channel (TC 1.A.9) family. Gamma-aminobutyric acid receptor (TC 1.A.9.5) subfamily. GABRG2 sub-subfamily. Heteropentamer, formed by a combination of alpha (GABRA1-6), beta (GABRB1-3), gamma (GABRG1-3), delta (GABRD), epsilon (GABRE), rho (GABRR1-3), pi (GABRP) and theta (GABRQ) chains, each subunit exhibiting distinct physiological and pharmacological properties. Interacts with GABARAP. Interacts with KIF21B. Identified in a complex of 720 kDa composed of LHFPL4, NLGN2, GABRA1, GABRB2, GABRG2 and GABRB3. Interacts with LHFPL4. Interacts with SHISA7; interaction leads to the regulation of GABA(A) receptor trafficking, channel deactivation kinetics and pharmacology. Post-translationally, palmitoylated by ZDHHC3/GODZ; required for the accumulation of GABA(A) receptors at the postsynaptic membrane of inhibitory GABAergic synapses. Glycosylated. As to expression, expressed in brain (at protein level). Expressed in lungs, in alveolar epithelium.

Its subcellular location is the postsynaptic cell membrane. The protein localises to the cell membrane. The protein resides in the cell projection. It localises to the dendrite. It is found in the cytoplasmic vesicle membrane. It carries out the reaction chloride(in) = chloride(out). Allosterically activated by benzodiazepines. Activated by pentobarbital. Inhibited by the antagonist bicuculline. Inhibited by zinc ions. Potentiated by histamine. Gamma subunit of the heteropentameric ligand-gated chloride channel gated by gamma-aminobutyric acid (GABA), a major inhibitory neurotransmitter in the brain. GABA-gated chloride channels, also named GABA(A) receptors (GABAAR), consist of five subunits arranged around a central pore and contain GABA active binding site(s) located at the alpha and beta subunit interface(s). When activated by GABA, GABAARs selectively allow the flow of chloride anions across the cell membrane down their electrochemical gradient. Gamma-2/GABRG2-containing GABAARs are found at both synaptic and extrasynaptic sites. Chloride influx into the postsynaptic neuron following GABAAR opening decreases the neuron ability to generate a new action potential, thereby reducing nerve transmission. GABAARs containing alpha-1 and beta-2 or -3 subunits exhibit synaptogenic activity; the gamma-2 subunit being necessary but not sufficient to induce rapid synaptic contacts formation. Extrasynaptic gamma-2-containing receptors contribute to the tonic GABAergic inhibition. GABAARs function also as histamine receptor where histamine binds at the interface of two neighboring beta subunits and potentiates GABA response in a gamma-2 subunit-controlled manner. This Rattus norvegicus (Rat) protein is Gamma-aminobutyric acid receptor subunit gamma-2.